The following is a 315-amino-acid chain: Manganese-dependent 2,3-dihydroxybiphenyl 1,2-dioxygenase (315 aa).

2 consecutive VOC domains span residues 7-121 (KFGH…IYYD) and 150-273 (RIDH…LFSG). The Mn(2+) site is built by His-153, His-216, and Glu-269.

The protein belongs to the extradiol ring-cleavage dioxygenase family. In terms of assembly, homotetramer. Mn(2+) is required as a cofactor.

The catalysed reaction is biphenyl-2,3-diol + O2 = 2-hydroxy-6-oxo-6-phenylhexa-2,4-dienoate + H(+). Its pathway is xenobiotic degradation; biphenyl degradation; 2-hydroxy-2,4-pentadienoate and benzoate from biphenyl: step 3/4. In terms of biological role, catalyzes the meta-cleavage of the hydroxylated biphenyl ring. The enzyme can oxidize a wide range of substrates, and the substrate preference order is 2,3-dihydroxybiphenyl &gt; 3-methylcatechol &gt; catechol &gt; 4-methylcatechol &gt; 4-chlorocatechol. In Geobacillus genomosp. 3, this protein is Manganese-dependent 2,3-dihydroxybiphenyl 1,2-dioxygenase (bphC).